The primary structure comprises 264 residues: Matrilysin (264 aa).

The first 17 residues, 1 to 17, serve as a signal peptide directing secretion; sequence MQLTLFCFVCLLPGHLA. A propeptide spans 18–94 (activation peptide); sequence LPLSQEAGDV…PRCGVPDVAE (77 aa). The short motif at 85–92 is the Cysteine switch element; sequence PRCGVPDV. Residue C87 participates in Zn(2+) binding. Residue D153 participates in Ca(2+) binding. Positions 163 and 165 each coordinate Zn(2+). Residues D170, G171, G173, and T175 each contribute to the Ca(2+) site. A Zn(2+)-binding site is contributed by H178. The Ca(2+) site is built by G185, G187, and D189. H191 serves as a coordination point for Zn(2+). Ca(2+)-binding residues include D193 and E196. H214 lines the Zn(2+) pocket. E215 is a catalytic residue. 2 residues coordinate Zn(2+): H218 and H224.

It belongs to the peptidase M10A family. The cofactor is Ca(2+). It depends on Zn(2+) as a cofactor. In terms of tissue distribution, expressed in the intestinal epithelium (at protein level).

It localises to the secreted. Its subcellular location is the extracellular space. It is found in the extracellular matrix. It catalyses the reaction Cleavage of 14-Ala-|-Leu-15 and 16-Tyr-|-Leu-17 in B chain of insulin. No action on collagen types I, II, IV, V. Cleaves gelatin chain alpha2(I) &gt; alpha1(I).. Functionally, degrades casein, gelatins of types I, III, IV, and V, and fibronectin. Activates procollagenase. Its function is as follows. May play a role in tissue reorganization. In Mus musculus (Mouse), this protein is Matrilysin (Mmp7).